The primary structure comprises 373 residues: ORC1-type DNA replication protein 2 (373 aa).

ATP-binding positions include 63-67 (TGKTS), Y205, and R217.

This sequence belongs to the CDC6/cdc18 family.

Involved in regulation of DNA replication. The sequence is that of ORC1-type DNA replication protein 2 (cdc6-2) from Methanosarcina mazei (strain ATCC BAA-159 / DSM 3647 / Goe1 / Go1 / JCM 11833 / OCM 88) (Methanosarcina frisia).